A 103-amino-acid chain; its full sequence is Regulator of rDNA transcription protein 1 (103 aa).

Transmembrane regions (helical) follow at residues Phe-9–Val-33 and Val-40–Phe-57.

Its subcellular location is the membrane. In terms of biological role, identified in a screen for mutants with decreased levels of rDNA transcription. The protein is Regulator of rDNA transcription protein 1 (RRT1) of Saccharomyces cerevisiae (strain ATCC 204508 / S288c) (Baker's yeast).